Consider the following 971-residue polypeptide: MTSIYTSDLKNHRRAPPPPNGAAGSGSGSGSGSGSGSGSLANIVTSSNSLGVTANQTKPIQLNINSSKRQSGWVHVKDDGIFTSFRWNKRFMVINDKTLNFYKQEPYSSDGNSNSNTPDLSFPLYLINNINLKPNSGYSKTSQSFEIVPKNNNKSILISVKTNNDYLDWLDAFTTKCPLVQIGENNSGVSSSHPHLQIQHLTNGSLNGNSSSSPTSGLLSSSVLTGGNSGVSGPINFTHKVHVGFDPASGNFTGLPDTWKSLLQHSKITNEDWKKDPVAVIEVLEFYSDINGGNSAAGTPIGSPMINSKTNNNNNDPNNYSSTKNNVQEANLQEWVKPPAKSTVSQFKPSRAAPKPPTPYHLTQLNGSSHQHTSSSGSLPSSGNNNNNNSTNNNNTKNVSPLNNLMNKSELIPARRAPPPPTSGTSSDTYSNKNHQDRSGYEQQRQQRTDSSQQQQQQKQHQYQQKSQQQQQQPQQPLSSHQGGTSHIPKQVPPTLPSSGPPTQAASGKSMPSKIHPDLKIQQGTNNYIKSSGTDANQVDGDAKQFIKPFNLQSKKSQQQLASKQPSPPSSQQQQQKPMTSHGLMGTSHSVTKPLNPVNDPIKPLNLKSSKSKEALNETSGVSKTPSPTDKSNKPTAPASGPAVTKTAKQLKKERERLNDLQIIAKLKTVVNNQDPKPLFRIVEKAGQGASGNVYLAEMIKDNNRKIAIKQMDLDAQPRKELIINEILVMKDSQHKNIVNFLDSYLIGDNELWVIMEYMQGGSLTEIIENNDFKLNEKQIATICFETLKGLQHLHKKHIIHRDIKSDNVLLDAYGNVKITDFGFCAKLTDQRNKRATMVGTPYWMAPEVVKQKEYDEKVDVWSLGIMTIEMIEGEPPYLNEEPLKALYLIATNGTPKLKKPELLSNSIKKFLSICLCVDVRYRASTDELLEHSFIQHKSGKIEELAPLLEWKKQQQKHQQHKQETSDTGFA.

The interval 1–40 (MTSIYTSDLKNHRRAPPPPNGAAGSGSGSGSGSGSGSGSL) is disordered. The span at 23–37 (AGSGSGSGSGSGSGS) shows a compositional bias: gly residues. A PH domain is found at 67–178 (SKRQSGWVHV…WLDAFTTKCP (112 aa)). The interval 201-221 (LTNGSLNGNSSSSPTSGLLSS) is disordered. The region spanning 231–244 (VSGPINFTHKVHVG) is the CRIB domain. 2 disordered regions span residues 292–517 (GGNS…KIHP) and 554–653 (SKKS…QLKK). 2 stretches are compositionally biased toward low complexity: residues 307–326 (NSKT…TKNN) and 365–404 (LNGS…PLNN). Residues 423–433 (SGTSSDTYSNK) show a composition bias toward polar residues. Positions 434 to 448 (NHQDRSGYEQQRQQR) are enriched in basic and acidic residues. A compositionally biased stretch (low complexity) spans 449–482 (TDSSQQQQQQKQHQYQQKSQQQQQQPQQPLSSHQ). Pro residues predominate over residues 491–500 (QVPPTLPSSG). The segment covering 554–578 (SKKSQQQLASKQPSPPSSQQQQQKP) has biased composition (low complexity). Residues 617 to 630 (NETSGVSKTPSPTD) are compositionally biased toward polar residues. The 256-residue stretch at 680 to 935 (FRIVEKAGQG…TDELLEHSFI (256 aa)) folds into the Protein kinase domain. ATP contacts are provided by residues 686 to 694 (AGQGASGNV) and Lys-710. Asp-803 serves as the catalytic Proton acceptor.

The protein belongs to the protein kinase superfamily. STE Ser/Thr protein kinase family. STE20 subfamily.

The catalysed reaction is L-seryl-[protein] + ATP = O-phospho-L-seryl-[protein] + ADP + H(+). It catalyses the reaction L-threonyl-[protein] + ATP = O-phospho-L-threonyl-[protein] + ADP + H(+). Its function is as follows. Essential for virulence and morphological switching (hyphal formation) of C.albicans. This is Serine/threonine-protein kinase CLA4 (CLA4) from Candida albicans (Yeast).